The sequence spans 449 residues: Glucose-6-phosphate isomerase (449 aa).

Glutamate 291 (proton donor) is an active-site residue. Catalysis depends on residues histidine 312 and lysine 426.

The protein belongs to the GPI family.

The protein localises to the cytoplasm. It catalyses the reaction alpha-D-glucose 6-phosphate = beta-D-fructose 6-phosphate. It participates in carbohydrate biosynthesis; gluconeogenesis. It functions in the pathway carbohydrate degradation; glycolysis; D-glyceraldehyde 3-phosphate and glycerone phosphate from D-glucose: step 2/4. Catalyzes the reversible isomerization of glucose-6-phosphate to fructose-6-phosphate. The protein is Glucose-6-phosphate isomerase of Streptococcus pyogenes serotype M6 (strain ATCC BAA-946 / MGAS10394).